A 295-amino-acid chain; its full sequence is Excinuclease cho (295 aa).

The GIY-YIG domain occupies 33–108; sequence TRPGVYLFHG…IKEQQPLFNK (76 aa).

In terms of biological role, incises the DNA at the 3' side of a lesion during nucleotide excision repair. Incises the DNA farther away from the lesion than UvrC. Not able to incise the 5' site of a lesion. In vitro, the incision activity of Cho is UvrA and UvrB dependent. When a lesion remains because UvrC is not able to induce the 3' incision, Cho incises the DNA. Then UvrC makes the 5' incision. The combined action of Cho and UvrC broadens the substrate range of nucleotide excision repair. The sequence is that of Excinuclease cho (cho) from Escherichia coli (strain K12).